Here is a 197-residue protein sequence, read N- to C-terminus: Imidazoleglycerol-phosphate dehydratase (197 aa).

It belongs to the imidazoleglycerol-phosphate dehydratase family.

The protein localises to the cytoplasm. It catalyses the reaction D-erythro-1-(imidazol-4-yl)glycerol 3-phosphate = 3-(imidazol-4-yl)-2-oxopropyl phosphate + H2O. The protein operates within amino-acid biosynthesis; L-histidine biosynthesis; L-histidine from 5-phospho-alpha-D-ribose 1-diphosphate: step 6/9. This is Imidazoleglycerol-phosphate dehydratase from Novosphingobium aromaticivorans (strain ATCC 700278 / DSM 12444 / CCUG 56034 / CIP 105152 / NBRC 16084 / F199).